Consider the following 158-residue polypeptide: SKP1-like protein 18 (158 aa).

An interaction with the F-box domain of F-box proteins region spans residues 99 to 157 (ILAANYLNFEGLLGFASQTVADYIKDKTPEEVREIFNIENDFTPEEEEEIRKENAWTFN).

This sequence belongs to the SKP1 family. As to quaternary structure, part of a SCF (SKP1-cullin-F-box) protein ligase complex. Interacts with CPR1/CPR30, EBF1, SKP2A, At3g61590, At4g38940 and At5g49610. In terms of tissue distribution, expressed in young seedlings, roots, leaves, floral stems, inflorescences, pollen, and siliques.

The protein localises to the nucleus. It functions in the pathway protein modification; protein ubiquitination. In terms of biological role, involved in ubiquitination and subsequent proteasomal degradation of target proteins. Together with CUL1, RBX1 and a F-box protein, it forms a SCF E3 ubiquitin ligase complex. The functional specificity of this complex depends on the type of F-box protein. In the SCF complex, it serves as an adapter that links the F-box protein to CUL1. The sequence is that of SKP1-like protein 18 (ASK18) from Arabidopsis thaliana (Mouse-ear cress).